Reading from the N-terminus, the 35-residue chain is MSDIN-like toxin proprotein 6 (35 aa).

Positions 1 to 10 (MSDINGTRLP) are excised as a propeptide. The segment at residues 11–20 (IPGLIPLGIP) is a cross-link (cyclopeptide (Ile-Pro)). The propeptide occupies 21–35 (CVSDDVNPTLTRGER).

It belongs to the MSDIN fungal toxin family. Processed by the macrocyclase-peptidase enzyme POPB to yield a toxic cyclic decapeptide. POPB first removes 10 residues from the N-terminus. Conformational trapping of the remaining peptide forces the enzyme to release this intermediate rather than proceed to macrocyclization. The enzyme rebinds the remaining peptide in a different conformation and catalyzes macrocyclization of the N-terminal 10 residues.

Its function is as follows. Probable toxin that belongs to the MSDIN-like toxin family responsible for a large number of food poisoning cases and deaths. The protein is MSDIN-like toxin proprotein 6 of Amanita bisporigera (Destroying angel).